The sequence spans 430 residues: Inactive metallocarboxypeptidase ECM14 (430 aa).

The first 24 residues, 1 to 24 (MLHMNSLWGCFLFVLLAVTGAVQG), serve as a signal peptide directing secretion. Positions 25-105 (LQEDYSEYAV…TLPTSQMMAR (81 aa)) are excised as a propeptide. Residue N41 is glycosylated (N-linked (GlcNAc...) asparagine). One can recognise a Peptidase M14 domain in the interval 120–425 (EYRDLDTIYM…AALKYFCDFL (306 aa)). Zn(2+) contacts are provided by H182 and E185. Residues 182–185 (HARE), R240, and 257–258 (DH) contribute to the substrate site. C251 and C272 are disulfide-bonded. N295 is a glycosylation site (N-linked (GlcNAc...) asparagine). Residue H310 coordinates Zn(2+). A substrate-binding site is contributed by 311–312 (SY).

Belongs to the peptidase M14 family. The cofactor is Zn(2+). N-glycosylated.

It is found in the vacuole. Its subcellular location is the secreted. Inactive carboxypeptidase that may play a role in cell wall organization and biogenesis. The sequence is that of Inactive metallocarboxypeptidase ECM14 from Saccharomyces cerevisiae (strain ATCC 204508 / S288c) (Baker's yeast).